Reading from the N-terminus, the 277-residue chain is Bifunctional protein FolD (277 aa).

Residues Gly-164–Ser-166, Ser-189, and Thr-230 each bind NADP(+).

Belongs to the tetrahydrofolate dehydrogenase/cyclohydrolase family. As to quaternary structure, homodimer.

It catalyses the reaction (6R)-5,10-methylene-5,6,7,8-tetrahydrofolate + NADP(+) = (6R)-5,10-methenyltetrahydrofolate + NADPH. The enzyme catalyses (6R)-5,10-methenyltetrahydrofolate + H2O = (6R)-10-formyltetrahydrofolate + H(+). It participates in one-carbon metabolism; tetrahydrofolate interconversion. Catalyzes the oxidation of 5,10-methylenetetrahydrofolate to 5,10-methenyltetrahydrofolate and then the hydrolysis of 5,10-methenyltetrahydrofolate to 10-formyltetrahydrofolate. The chain is Bifunctional protein FolD from Clostridium perfringens (strain SM101 / Type A).